The primary structure comprises 144 residues: Large ribosomal subunit protein uL22 (144 aa).

The span at 124–137 shows a compositional bias: basic residues; sequence RLKKRVLGQNKRKQ. Residues 124-144 form a disordered region; that stretch reads RLKKRVLGQNKRKQSVSGEKK.

The protein belongs to the universal ribosomal protein uL22 family. As to quaternary structure, part of the 50S ribosomal subunit.

In terms of biological role, this protein binds specifically to 23S rRNA; its binding is stimulated by other ribosomal proteins, e.g. L4, L17, and L20. It is important during the early stages of 50S assembly. It makes multiple contacts with different domains of the 23S rRNA in the assembled 50S subunit and ribosome. The globular domain of the protein is located near the polypeptide exit tunnel on the outside of the subunit, while an extended beta-hairpin is found that lines the wall of the exit tunnel in the center of the 70S ribosome. The protein is Large ribosomal subunit protein uL22 of Mycoplasmoides gallisepticum (strain R(low / passage 15 / clone 2)) (Mycoplasma gallisepticum).